The sequence spans 235 residues: Motile sperm domain-containing protein 3 (235 aa).

Disordered regions lie at residues 1-30 (MRRG…PSGP) and 143-170 (ELQG…PFPE). The 113-residue stretch at 33–145 (PVLVFPPDLV…RAPAYPLELQ (113 aa)) folds into the MSP domain. 2 helical membrane passes run 180–200 (SFLL…LPLQ) and 213–233 (VSLG…MVFL).

The protein resides in the membrane. The chain is Motile sperm domain-containing protein 3 (MOSPD3) from Bos taurus (Bovine).